The chain runs to 114 residues: uncharacterized protein (114 aa).

Residues 90–114 (VESSQKRKPEESTIGMDAPKKMKRG) form a disordered region.

This is an uncharacterized protein from Caenorhabditis elegans.